The chain runs to 299 residues: Fluorinase (299 aa).

S-adenosyl-L-methionine-binding positions include Asp15, 20–22 (DDS), Tyr76, Ser157, Asp210, Asn215, 269–270 (SR), and 277–279 (RNA).

Belongs to the SAM hydrolase / SAM-dependent halogenase family.

The enzyme catalyses fluoride + S-adenosyl-L-methionine = 5'-deoxy-5'-fluoroadenosine + L-methionine. With respect to regulation, activity is not severely affected by most metal ions (Mg(2+), Mn(2+), Co(2+) and Fe(2+)), but both Cu(2+) and Zn(2+) are strong inhibitors. Functionally, catalyzes the formation of a C-F bond by combining S-adenosyl-L-methionine (SAM) and fluoride to generate 5'-fluoro-5'-deoxyadenosine (5'-FDA) and L-methionine. The polypeptide is Fluorinase (Actinopolyspora mzabensis).